Consider the following 86-residue polypeptide: UPF0180 protein CA_C1486 (86 aa).

It belongs to the UPF0180 family.

The chain is UPF0180 protein CA_C1486 from Clostridium acetobutylicum (strain ATCC 824 / DSM 792 / JCM 1419 / IAM 19013 / LMG 5710 / NBRC 13948 / NRRL B-527 / VKM B-1787 / 2291 / W).